The primary structure comprises 420 residues: L-rhamnose isomerase (420 aa).

3 residues coordinate Mn(2+): histidine 264, aspartate 296, and aspartate 298.

The protein belongs to the rhamnose isomerase family. Requires Mn(2+) as cofactor.

It localises to the cytoplasm. It catalyses the reaction L-rhamnopyranose = L-rhamnulose. Its pathway is carbohydrate degradation; L-rhamnose degradation; glycerone phosphate from L-rhamnose: step 1/3. Functionally, catalyzes the interconversion of L-rhamnose and L-rhamnulose. The chain is L-rhamnose isomerase from Listeria monocytogenes serotype 4b (strain CLIP80459).